The sequence spans 1217 residues: ATP-dependent helicase/nuclease subunit A (1217 aa).

Residues 10–475 form the UvrD-like helicase ATP-binding domain; that stretch reads VIWTDAQWQS…IDLSQNFRSR (466 aa). 31–38 lines the ATP pocket; the sequence is AAAGSGKT. The UvrD-like helicase C-terminal domain occupies 476–786; the sequence is KEVLSTTNYI…RMMTIHSSKG (311 aa).

This sequence belongs to the helicase family. AddA subfamily. Heterodimer of AddA and AddB/RexB. Mg(2+) serves as cofactor.

It catalyses the reaction Couples ATP hydrolysis with the unwinding of duplex DNA by translocating in the 3'-5' direction.. The catalysed reaction is ATP + H2O = ADP + phosphate + H(+). The heterodimer acts as both an ATP-dependent DNA helicase and an ATP-dependent, dual-direction single-stranded exonuclease. Recognizes the chi site generating a DNA molecule suitable for the initiation of homologous recombination. The AddA nuclease domain is required for chi fragment generation; this subunit has the helicase and 3' -&gt; 5' nuclease activities. The protein is ATP-dependent helicase/nuclease subunit A of Staphylococcus aureus (strain NCTC 8325 / PS 47).